The following is a 30-amino-acid chain: Trypsin inhibitor 3 (30 aa).

Intrachain disulfides connect Cys-4–Cys-21, Cys-11–Cys-23, and Cys-17–Cys-29.

Belongs to the protease inhibitor I7 (squash-type serine protease inhibitor) family.

Its subcellular location is the secreted. In terms of biological role, inhibits trypsin. The polypeptide is Trypsin inhibitor 3 (Momordica charantia (Bitter gourd)).